Consider the following 160-residue polypeptide: SsrA-binding protein (160 aa).

Residues 135 to 160 are disordered; the sequence is KTHDKRETIKERDWKREQSRILRDRG. Positions 138-160 are enriched in basic and acidic residues; sequence DKRETIKERDWKREQSRILRDRG.

The protein belongs to the SmpB family.

The protein localises to the cytoplasm. In terms of biological role, required for rescue of stalled ribosomes mediated by trans-translation. Binds to transfer-messenger RNA (tmRNA), required for stable association of tmRNA with ribosomes. tmRNA and SmpB together mimic tRNA shape, replacing the anticodon stem-loop with SmpB. tmRNA is encoded by the ssrA gene; the 2 termini fold to resemble tRNA(Ala) and it encodes a 'tag peptide', a short internal open reading frame. During trans-translation Ala-aminoacylated tmRNA acts like a tRNA, entering the A-site of stalled ribosomes, displacing the stalled mRNA. The ribosome then switches to translate the ORF on the tmRNA; the nascent peptide is terminated with the 'tag peptide' encoded by the tmRNA and targeted for degradation. The ribosome is freed to recommence translation, which seems to be the essential function of trans-translation. The protein is SsrA-binding protein of Sphingomonas elodea.